A 64-amino-acid polypeptide reads, in one-letter code: Large ribosomal subunit protein bL35 (64 aa).

The segment covering Met-1–Lys-15 has biased composition (basic residues). The tract at residues Met-1–Leu-23 is disordered.

The protein belongs to the bacterial ribosomal protein bL35 family.

The protein is Large ribosomal subunit protein bL35 of Rhodococcus jostii (strain RHA1).